A 398-amino-acid polypeptide reads, in one-letter code: Succinyl-diaminopimelate desuccinylase (398 aa).

Residue histidine 68 coordinates Zn(2+). Aspartate 70 is an active-site residue. Aspartate 101 lines the Zn(2+) pocket. Glutamate 135 acts as the Proton acceptor in catalysis. Residues glutamate 136, glutamate 164, and histidine 349 each coordinate Zn(2+).

This sequence belongs to the peptidase M20A family. DapE subfamily. As to quaternary structure, homodimer. The cofactor is Zn(2+). Requires Co(2+) as cofactor.

It catalyses the reaction N-succinyl-(2S,6S)-2,6-diaminopimelate + H2O = (2S,6S)-2,6-diaminopimelate + succinate. The protein operates within amino-acid biosynthesis; L-lysine biosynthesis via DAP pathway; LL-2,6-diaminopimelate from (S)-tetrahydrodipicolinate (succinylase route): step 3/3. In terms of biological role, catalyzes the hydrolysis of N-succinyl-L,L-diaminopimelic acid (SDAP), forming succinate and LL-2,6-diaminopimelate (DAP), an intermediate involved in the bacterial biosynthesis of lysine and meso-diaminopimelic acid, an essential component of bacterial cell walls. The polypeptide is Succinyl-diaminopimelate desuccinylase (Wolbachia pipientis subsp. Culex pipiens (strain wPip)).